The sequence spans 304 residues: ATP phosphoribosyltransferase (304 aa).

Belongs to the ATP phosphoribosyltransferase family. Long subfamily. Mg(2+) is required as a cofactor.

It is found in the cytoplasm. It catalyses the reaction 1-(5-phospho-beta-D-ribosyl)-ATP + diphosphate = 5-phospho-alpha-D-ribose 1-diphosphate + ATP. The protein operates within amino-acid biosynthesis; L-histidine biosynthesis; L-histidine from 5-phospho-alpha-D-ribose 1-diphosphate: step 1/9. With respect to regulation, feedback inhibited by histidine. Catalyzes the condensation of ATP and 5-phosphoribose 1-diphosphate to form N'-(5'-phosphoribosyl)-ATP (PR-ATP). Has a crucial role in the pathway because the rate of histidine biosynthesis seems to be controlled primarily by regulation of HisG enzymatic activity. In Xanthomonas campestris pv. campestris (strain 8004), this protein is ATP phosphoribosyltransferase.